The primary structure comprises 222 residues: ATP-dependent dethiobiotin synthetase BioD (222 aa).

Residue 12–17 (DVGKTI) coordinates ATP. Threonine 16 serves as a coordination point for Mg(2+). Lysine 37 is a catalytic residue. Residue threonine 41 participates in substrate binding. Residues aspartate 49, 107-110 (EGAG), 167-168 (GS), and 197-199 (AEG) contribute to the ATP site. Mg(2+) is bound by residues aspartate 49 and glutamate 107.

It belongs to the dethiobiotin synthetase family. As to quaternary structure, homodimer. Mg(2+) serves as cofactor.

Its subcellular location is the cytoplasm. It catalyses the reaction (7R,8S)-7,8-diammoniononanoate + CO2 + ATP = (4R,5S)-dethiobiotin + ADP + phosphate + 3 H(+). It participates in cofactor biosynthesis; biotin biosynthesis; biotin from 7,8-diaminononanoate: step 1/2. Catalyzes a mechanistically unusual reaction, the ATP-dependent insertion of CO2 between the N7 and N8 nitrogen atoms of 7,8-diaminopelargonic acid (DAPA, also called 7,8-diammoniononanoate) to form a ureido ring. The polypeptide is ATP-dependent dethiobiotin synthetase BioD (Corynebacterium diphtheriae (strain ATCC 700971 / NCTC 13129 / Biotype gravis)).